We begin with the raw amino-acid sequence, 523 residues long: UDP-glucuronosyltransferase 3A1 (523 aa).

An N-terminal signal peptide occupies residues Met-1–Ala-22. The Extracellular segment spans residues Ala-23–Asp-487. N-linked (GlcNAc...) asparagine glycosylation occurs at Asn-70. A helical membrane pass occupies residues Val-488–Val-508. The Cytoplasmic portion of the chain corresponds to Ala-509–Ala-523.

The protein belongs to the UDP-glycosyltransferase family. Highly expressed in kidney, while it is expressed at low levels in liver. Not detected in other tissues examined.

It localises to the membrane. It catalyses the reaction glucuronate acceptor + UDP-alpha-D-glucuronate = acceptor beta-D-glucuronoside + UDP + H(+). Its function is as follows. UDP-glucuronosyltransferases catalyze phase II biotransformation reactions in which lipophilic substrates are conjugated with glucuronic acid to increase water solubility and enhance excretion. They are of major importance in the conjugation and subsequent elimination of potentially toxic xenobiotics and endogenous compounds. The chain is UDP-glucuronosyltransferase 3A1 (Ugt3a1) from Mus musculus (Mouse).